The following is a 349-amino-acid chain: tRNA pseudouridine synthase D (349 aa).

Phe-27 contributes to the substrate binding site. Residue Asp-80 is the Nucleophile of the active site. Position 129 (Asn-129) interacts with substrate. The TRUD domain occupies 155–303 (GVPNYFGAQR…VEASRRAMLL (149 aa)). A substrate-binding site is contributed by Phe-329.

The protein belongs to the pseudouridine synthase TruD family.

It carries out the reaction uridine(13) in tRNA = pseudouridine(13) in tRNA. Functionally, responsible for synthesis of pseudouridine from uracil-13 in transfer RNAs. The chain is tRNA pseudouridine synthase D from Salmonella dublin (strain CT_02021853).